Reading from the N-terminus, the 198-residue chain is Uracil phosphoribosyltransferase homolog (198 aa).

This sequence belongs to the UPRTase family.

The protein resides in the plastid. Its subcellular location is the chloroplast. This is Uracil phosphoribosyltransferase homolog from Pyropia yezoensis (Susabi-nori).